A 122-amino-acid chain; its full sequence is Ribonuclease P protein component (122 aa).

Belongs to the RnpA family. As to quaternary structure, consists of a catalytic RNA component (M1 or rnpB) and a protein subunit.

The enzyme catalyses Endonucleolytic cleavage of RNA, removing 5'-extranucleotides from tRNA precursor.. Functionally, RNaseP catalyzes the removal of the 5'-leader sequence from pre-tRNA to produce the mature 5'-terminus. It can also cleave other RNA substrates such as 4.5S RNA. The protein component plays an auxiliary but essential role in vivo by binding to the 5'-leader sequence and broadening the substrate specificity of the ribozyme. This is Ribonuclease P protein component from Lactobacillus gasseri (strain ATCC 33323 / DSM 20243 / BCRC 14619 / CIP 102991 / JCM 1131 / KCTC 3163 / NCIMB 11718 / NCTC 13722 / AM63).